The sequence spans 569 residues: Urease subunit beta (569 aa).

Positions 131–569 (GGIDTHIHFI…VSLAQLFSIF (439 aa)) constitute a Urease domain. His-136, His-138, and Lys-219 together coordinate Ni(2+). At Lys-219 the chain carries N6-carboxylysine. His-221 serves as a coordination point for substrate. Ni(2+) is bound by residues His-248 and His-274. His-322 serves as the catalytic Proton donor. Asp-362 provides a ligand contact to Ni(2+).

This sequence belongs to the metallo-dependent hydrolases superfamily. Urease alpha subunit family. In terms of assembly, heterohexamer of 3 UreA (alpha) and 3 UreB (beta) subunits. Requires Ni cation as cofactor. Post-translationally, carboxylation allows a single lysine to coordinate two nickel ions.

Its subcellular location is the cytoplasm. The enzyme catalyses urea + 2 H2O + H(+) = hydrogencarbonate + 2 NH4(+). The protein operates within nitrogen metabolism; urea degradation; CO(2) and NH(3) from urea (urease route): step 1/1. The polypeptide is Urease subunit beta (Helicobacter pylori (strain Shi470)).